The sequence spans 223 residues: Adapter protein MecA (223 aa).

It belongs to the MecA family. Homodimer.

Its function is as follows. Enables the recognition and targeting of unfolded and aggregated proteins to the ClpC protease or to other proteins involved in proteolysis. This is Adapter protein MecA from Limosilactobacillus reuteri (strain DSM 20016) (Lactobacillus reuteri).